A 368-amino-acid polypeptide reads, in one-letter code: Tetraacyldisaccharide 4'-kinase (368 aa).

An ATP-binding site is contributed by 66–73 (TVGGTGKT).

The protein belongs to the LpxK family.

It carries out the reaction a lipid A disaccharide + ATP = a lipid IVA + ADP + H(+). Its pathway is glycolipid biosynthesis; lipid IV(A) biosynthesis; lipid IV(A) from (3R)-3-hydroxytetradecanoyl-[acyl-carrier-protein] and UDP-N-acetyl-alpha-D-glucosamine: step 6/6. Functionally, transfers the gamma-phosphate of ATP to the 4'-position of a tetraacyldisaccharide 1-phosphate intermediate (termed DS-1-P) to form tetraacyldisaccharide 1,4'-bis-phosphate (lipid IVA). The protein is Tetraacyldisaccharide 4'-kinase of Desulfatibacillum aliphaticivorans.